Here is a 592-residue protein sequence, read N- to C-terminus: Bifunctional purine biosynthesis protein ATIC (592 aa).

The residue at position 1 (M1) is an N-acetylmethionine. The MGS-like domain occupies 2–146 (APGQLALFSV…KNHARVTVVC (145 aa)). An IMP cyclohydrolase region spans residues 2 to 198 (APGQLALFSV…ISDYFRKQYS (197 aa)). IMP-binding positions include 12-14 (SDK), 34-37 (SGGT), 64-67 (RVKT), 101-102 (CN), and 125-126 (DI). Catalysis depends on K137, which acts as the Proton donor/acceptor; for FAICAR cyclization activity. At K199 the chain carries N6-acetyllysine. The tract at residues 199-592 (KGVSQMPLRY…AHTNLRLFHH (394 aa)) is AICAR formyltransferase. Residues 207–208 (RY), H267, G316, D339, N431, and R451 contribute to the 5-amino-1-(5-phospho-beta-D-ribosyl)imidazole-4-carboxamide site. H267 functions as the Proton acceptor; for AICAR formyltransferase activity in the catalytic mechanism. Residue I452 coordinates (6R)-10-formyltetrahydrofolate. F541 is a 5-amino-1-(5-phospho-beta-D-ribosyl)imidazole-4-carboxamide binding site. (6R)-10-formyltetrahydrofolate contacts are provided by residues D546 and 565–566 (SA). Residue R588 coordinates 5-amino-1-(5-phospho-beta-D-ribosyl)imidazole-4-carboxamide.

The protein belongs to the PurH family. In terms of assembly, homodimer. Associates with internalized INSR complexes on Golgi/endosomal membranes. Interacts with INSR; ATIC together with PRKAA2/AMPK2 and HACD3/PTPLAD1 is proposed to be part of a signaling network regulating INSR autophosphorylation and endocytosis. In terms of tissue distribution, present in the heart, brain, placenta, lung, liver, skeletal muscle, kidney, pancreas.

Its subcellular location is the cytoplasm. It localises to the cytosol. It carries out the reaction (6R)-10-formyltetrahydrofolate + 5-amino-1-(5-phospho-beta-D-ribosyl)imidazole-4-carboxamide = 5-formamido-1-(5-phospho-D-ribosyl)imidazole-4-carboxamide + (6S)-5,6,7,8-tetrahydrofolate. The catalysed reaction is 10-formyldihydrofolate + 5-amino-1-(5-phospho-beta-D-ribosyl)imidazole-4-carboxamide = 5-formamido-1-(5-phospho-D-ribosyl)imidazole-4-carboxamide + 7,8-dihydrofolate. The enzyme catalyses IMP + H2O = 5-formamido-1-(5-phospho-D-ribosyl)imidazole-4-carboxamide. It catalyses the reaction 5-amino-1-(5-phospho-D-ribosyl)imidazole-4-thiocarboxamide + 10-formyldihydrofolate = 6-thio-IMP + 7,8-dihydrofolate + H2O. Its pathway is purine metabolism; IMP biosynthesis via de novo pathway; 5-formamido-1-(5-phospho-D-ribosyl)imidazole-4-carboxamide from 5-amino-1-(5-phospho-D-ribosyl)imidazole-4-carboxamide (10-formyl THF route): step 1/1. The protein operates within purine metabolism; IMP biosynthesis via de novo pathway; IMP from 5-formamido-1-(5-phospho-D-ribosyl)imidazole-4-carboxamide: step 1/1. Its activity is regulated as follows. AMP and XMP inhibit AICAR formyltransferase activity. AICAR formyltransferase activity is inhibited by N-(6-fluoro-1-oxo-1,2-dihydroisoquinolin-7-yl)-5- [(3R)-3-hydroxypyrrolidin-1-yl]thiophene-2-sulfonamide (LSN 3213128), which acts as a tumor suppression in cancer cell lines. In terms of biological role, bifunctional enzyme that catalyzes the last two steps of purine biosynthesis. Acts as a transformylase that incorporates a formyl group to the AMP analog AICAR (5-amino-1-(5-phospho-beta-D-ribosyl)imidazole-4-carboxamide) to produce the intermediate formyl-AICAR (FAICAR). Can use both 10-formyldihydrofolate and 10-formyltetrahydrofolate as the formyl donor in this reaction. Also catalyzes the cyclization of FAICAR to inosine monophosphate (IMP). Is able to convert thio-AICAR to 6-mercaptopurine ribonucleotide, an inhibitor of purine biosynthesis used in the treatment of human leukemias. Promotes insulin receptor/INSR autophosphorylation and is involved in INSR internalization. This Homo sapiens (Human) protein is Bifunctional purine biosynthesis protein ATIC.